The primary structure comprises 35 residues: Small toxic polypeptide LdrA (35 aa).

The helical transmembrane segment at 8 to 28 threads the bilayer; the sequence is MIFWHDLAAPILAGIITAAIV.

This sequence belongs to the Ldr toxic peptide family.

The protein localises to the cell inner membrane. Toxic component of a type I toxin-antitoxin (TA) system. Inhibits ATP synthesis possibly due to its insertion in the cell inner membrane, ATP levels drop over 50% 2 minutes after induction. Overexpression is toxic leading to cell death, it inhibits cell growth within 30 minutes; C-terminally tagged versions of the protein are toxic while N-terminally tagged versions are not. In Escherichia coli (strain K12), this protein is Small toxic polypeptide LdrA (ldrA).